Reading from the N-terminus, the 344-residue chain is N-acetyl-gamma-glutamyl-phosphate reductase (344 aa).

Cys149 is a catalytic residue.

Belongs to the NAGSA dehydrogenase family. Type 1 subfamily.

It localises to the cytoplasm. The catalysed reaction is N-acetyl-L-glutamate 5-semialdehyde + phosphate + NADP(+) = N-acetyl-L-glutamyl 5-phosphate + NADPH + H(+). It functions in the pathway amino-acid biosynthesis; L-arginine biosynthesis; N(2)-acetyl-L-ornithine from L-glutamate: step 3/4. Catalyzes the NADPH-dependent reduction of N-acetyl-5-glutamyl phosphate to yield N-acetyl-L-glutamate 5-semialdehyde. This is N-acetyl-gamma-glutamyl-phosphate reductase from Halorhodospira halophila (strain DSM 244 / SL1) (Ectothiorhodospira halophila (strain DSM 244 / SL1)).